We begin with the raw amino-acid sequence, 217 residues long: MQLFLDTTDVAVLKDLAATGLVDGVTTNPSLIAKSGRNMLEVIAEICGIVEGPVSAEVAGTDVHTMLAEGRKLAGVAPNVVVKVPLTREGLIATSEFCAEGIQTNVTLCFSAAQALLAAKAGATYISPFIGRLDDHGAEGMDLISEIRAIYDNYDFDTEILAASIRTSAHVKEAALAGADCATIPPDVFQALFKHPLTEKGLQQFLADWAKTGQSIL.

Catalysis depends on Lys83, which acts as the Schiff-base intermediate with substrate.

Belongs to the transaldolase family. Type 3B subfamily.

It localises to the cytoplasm. It catalyses the reaction D-sedoheptulose 7-phosphate + D-glyceraldehyde 3-phosphate = D-erythrose 4-phosphate + beta-D-fructose 6-phosphate. It functions in the pathway carbohydrate degradation; pentose phosphate pathway; D-glyceraldehyde 3-phosphate and beta-D-fructose 6-phosphate from D-ribose 5-phosphate and D-xylulose 5-phosphate (non-oxidative stage): step 2/3. Functionally, transaldolase is important for the balance of metabolites in the pentose-phosphate pathway. The polypeptide is Probable transaldolase (Phenylobacterium zucineum (strain HLK1)).